Reading from the N-terminus, the 476-residue chain is Glycogen synthase (476 aa).

K15 is a binding site for ADP-alpha-D-glucose.

It belongs to the glycosyltransferase 1 family. Bacterial/plant glycogen synthase subfamily.

The catalysed reaction is [(1-&gt;4)-alpha-D-glucosyl](n) + ADP-alpha-D-glucose = [(1-&gt;4)-alpha-D-glucosyl](n+1) + ADP + H(+). The protein operates within glycan biosynthesis; glycogen biosynthesis. Functionally, synthesizes alpha-1,4-glucan chains using ADP-glucose. The chain is Glycogen synthase from Yersinia pestis bv. Antiqua (strain Antiqua).